An 856-amino-acid polypeptide reads, in one-letter code: FO synthase (856 aa).

2 consecutive Radical SAM core domains span residues Ile-84–Asn-336 and Val-544–Gln-785. A cofG-like region spans residues Ser-85–Leu-417. [4Fe-4S] cluster is bound by residues Cys-98, Cys-102, Cys-105, Cys-558, Cys-562, and Cys-565. The cofH-like stretch occupies residues Asp-521–Leu-854.

This sequence in the N-terminal section; belongs to the radical SAM superfamily. CofG family. It in the C-terminal section; belongs to the radical SAM superfamily. CofH family. The cofactor is [4Fe-4S] cluster.

The enzyme catalyses 5-amino-6-(D-ribitylamino)uracil + L-tyrosine + S-adenosyl-L-methionine = 5-amino-5-(4-hydroxybenzyl)-6-(D-ribitylimino)-5,6-dihydrouracil + 2-iminoacetate + 5'-deoxyadenosine + L-methionine + H(+). It catalyses the reaction 5-amino-5-(4-hydroxybenzyl)-6-(D-ribitylimino)-5,6-dihydrouracil + S-adenosyl-L-methionine = 7,8-didemethyl-8-hydroxy-5-deazariboflavin + 5'-deoxyadenosine + L-methionine + NH4(+) + H(+). It functions in the pathway cofactor biosynthesis; coenzyme F0 biosynthesis. Its function is as follows. Catalyzes the radical-mediated synthesis of 7,8-didemethyl-8-hydroxy-5-deazariboflavin (FO) from 5-amino-6-(D-ribitylamino)uracil and L-tyrosine. The polypeptide is FO synthase (fbiC) (Mycobacterium bovis (strain ATCC BAA-935 / AF2122/97)).